The chain runs to 242 residues: Ribosomal RNA small subunit methyltransferase G (242 aa).

Residues glycine 78, phenylalanine 83, alanine 129–glutamate 130, and arginine 148 contribute to the S-adenosyl-L-methionine site.

This sequence belongs to the methyltransferase superfamily. RNA methyltransferase RsmG family.

Its subcellular location is the cytoplasm. Its function is as follows. Specifically methylates the N7 position of a guanine in 16S rRNA. In Lachnoclostridium phytofermentans (strain ATCC 700394 / DSM 18823 / ISDg) (Clostridium phytofermentans), this protein is Ribosomal RNA small subunit methyltransferase G.